The chain runs to 101 residues: Apolipoprotein C-II (101 aa).

An N-terminal signal peptide occupies residues 1–22 (MGTRFLLALFLVLLVLGFEVQG). Residues 66 to 74 (TVDEKLRDM) are lipid binding. A lipoprotein lipase cofactor region spans residues 78–101 (STAAMSTYAGILTDQVLSMLKGEE).

The protein belongs to the apolipoprotein C2 family. Proapolipoprotein C-II is synthesized as a sialic acid containing glycoprotein which is subsequently desialylated prior to its proteolytic processing. In terms of processing, proapolipoprotein C-II, the major form found in plasma undergoes proteolytic cleavage of its N-terminal hexapeptide to generate apolipoprotein C-II, which occurs as the minor form in plasma.

The protein resides in the secreted. In terms of biological role, component of chylomicrons, very low-density lipoproteins (VLDL), low-density lipoproteins (LDL), and high-density lipoproteins (HDL) in plasma. Plays an important role in lipoprotein metabolism as an activator of lipoprotein lipase. Both proapolipoprotein C-II and apolipoprotein C-II can activate lipoprotein lipase. In Aotus nancymaae (Ma's night monkey), this protein is Apolipoprotein C-II (APOC2).